A 407-amino-acid polypeptide reads, in one-letter code: Elongation factor Tu (407 aa).

Positions 10-217 (KPHVNVGTIG…ALDSYIPEPE (208 aa)) constitute a tr-type G domain. The G1 stretch occupies residues 19–26 (GHVDHGKT). 19–26 (GHVDHGKT) provides a ligand contact to GTP. Thr26 serves as a coordination point for Mg(2+). The G2 stretch occupies residues 60 to 64 (GITIA). Residues 81–84 (DCPG) form a G3 region. GTP contacts are provided by residues 81–85 (DCPGH) and 136–139 (NKAD). The interval 136 to 139 (NKAD) is G4. The tract at residues 184 to 186 (SAL) is G5.

It belongs to the TRAFAC class translation factor GTPase superfamily. Classic translation factor GTPase family. EF-Tu/EF-1A subfamily. As to quaternary structure, monomer.

The protein localises to the cytoplasm. The catalysed reaction is GTP + H2O = GDP + phosphate + H(+). Functionally, GTP hydrolase that promotes the GTP-dependent binding of aminoacyl-tRNA to the A-site of ribosomes during protein biosynthesis. In Saccharophagus degradans (strain 2-40 / ATCC 43961 / DSM 17024), this protein is Elongation factor Tu.